The sequence spans 126 residues: DNA-directed RNA polymerase I subunit RPA12 (126 aa).

Zn(2+)-binding residues include C20, C23, C38, C41, C87, and C90. A C4-type zinc finger spans residues C20–C41. Residues V83–K123 form a TFIIS-type zinc finger. The Hairpin signature appears at D106–E107. Residues C115 and C118 each contribute to the Zn(2+) site.

The protein belongs to the archaeal RpoM/eukaryotic RPA12/RPB9/RPC11 RNA polymerase family. As to quaternary structure, component of the RNA polymerase I (Pol I) complex consisting of 13 subunits: a ten-subunit catalytic core composed of POLR1A/RPA1, POLR1B/RPA2, POLR1C/RPAC1, POLR1D/RPAC2, POLR1H/RPA12, POLR2E/RPABC1, POLR2F/RPABC2, POLR2H/RPABC3, POLR2K/RPABC4 and POLR2L/RPABC5; a mobile stalk subunit POLR1F/RPA43 protruding from the core and additional subunits homologous to general transcription factors POLR1E/RPA49 and POLR1G/RPA34. Part of Pol I pre-initiation complex (PIC), in which Pol I core assembles with RRN3 and promoter-bound UTBF and SL1/TIF-IB complex.

Its subcellular location is the nucleus. The protein resides in the nucleolus. In terms of biological role, core component of RNA polymerase I (Pol I), a DNA-dependent RNA polymerase which synthesizes ribosomal RNA precursors using the four ribonucleoside triphosphates as substrates. Can mediate Pol I proofreading of the nascent RNA transcript. Anchors into the Pol I active site to monitor transcription fidelity and cleave mis-incorporated 5'-ribonucleotides. The protein is DNA-directed RNA polymerase I subunit RPA12 of Macaca mulatta (Rhesus macaque).